Here is a 369-residue protein sequence, read N- to C-terminus: Polycomb group protein FERTILIZATION-INDEPENDENT ENDOSPERM (369 aa).

WD repeat units lie at residues 31–73, 81–123, 126–166, 172–212, 238–275, 287–328, and 335–368; these read EGKK…AISA, DKEE…IHKS, GHGD…CILI, GHRY…TYVE, IHTN…NSPG, VPMC…PVLI, and QSKS…DVIT.

The protein belongs to the WD repeat ESC family. As to quaternary structure, interacts directly with MEA. These two proteins are probably indirectly associated with FIS2. In plants, PcG complexes are probably composed of a member of the EZ family (CLF or MEA), FIE, and a member of the VEFS family (FIS2, VRN2 or EMF2). Component of the plant homeodomain / polycomb repressive complex 2 (PHD-PRC2) large complex during prolonged cold, composed of core PRC2 components (VRN2, EZA1, FIE and MSI1), and three related PHD finger proteins (VIL1, VIL2 and VIN3) that mediates histone H3 trimethylation on 'Lys-27' (H3K27me3). Binds to ALP1. As to expression, expressed in cauline leaves, root and stems. In the male reproductive organ, it is expressed in the developing anther; and is abundant in microspore mother cells, in microsporocytes and in the tapetum, but is absent from vascular bundles, the connective tissue and the filament. It is also absent from pollen grains at subsequent developmental stages. In the developing female reproductive organs, it is highly expressed in all cells of the young ovules primordium before archesporial differentiation. Then, it is highly expressed in the ovule sporophytic tissue and the megaspore mother cell before meiosis, but is absent from placenta or the developing carpel. Then, it decreases.

Its subcellular location is the nucleus. Polycomb group (PcG) protein. PcG proteins act by forming multiprotein complexes, which are required to maintain the transcriptionally repressive state of homeotic genes throughout development. PcG proteins are not required to initiate repression, but to maintain it during later stages of development. They probably act via the methylation of histones, rendering chromatin heritably changed in its expressibility. Required to prevent the proliferation of the central cell by repressing unknown target genes before fertilization. Probably also involved in floral repression mechanism established during early plant development. Regulates the anteroposterior organization of the endosperm. Interacts with the promoter and represses the transcription of genes such as PHE1, that are paternally active and maternally silenced. The chain is Polycomb group protein FERTILIZATION-INDEPENDENT ENDOSPERM (FIE) from Arabidopsis thaliana (Mouse-ear cress).